Consider the following 343-residue polypeptide: Probable long-chain-alcohol O-fatty-acyltransferase 2 (343 aa).

A run of 8 helical transmembrane segments spans residues 7–27 (NLIKVWISALISISYCYYISS), 36–56 (LLSLLPIFIIFLLLPLFFSSV), 58–78 (FCVISGFFFTWLANFKLFLFA), 117–137 (PMSKWVLAFKLLIFSFLLHVY), 148–168 (FAFLALFTIHVYLEAELILVF), 235–255 (GMLATFIVSGLMHELIYFYVI), 260–280 (TWEVTCFFLLHGVVTCLEIAM), and 292–312 (AVSGLAITVFLLVTAGWLFYP).

It belongs to the wax synthase family.

The protein localises to the membrane. The catalysed reaction is a long chain fatty alcohol + a fatty acyl-CoA = a wax ester + CoA. Catalyzes the final step in the synthesis of long-chain linear esters (waxes). This chain is Probable long-chain-alcohol O-fatty-acyltransferase 2 (AT2), found in Arabidopsis thaliana (Mouse-ear cress).